The sequence spans 496 residues: MDPLGARSCFVDADILPCWADVSNEEGEDVPDGGRKDVPDGGSHSPFPYRKDINEKVILWKGDVALLNCTALVNTSNETLTDKNPVSDSIFRYSGPELLEEMQKLKGCRTGEAKLTKGFNLAARYIIHTVGPKYKTKYRTAAESSLYSCYRNVLQLAKEQGMASVGFCVITTQKRCYPLDDATHIALRTVRRFLEVHGQALEKVVFAVTEEEEGTYRRLLPLYFPRSLEEEQRSILLLPQDIGNSDGEPVVPERQIRISEKPGVQEEDSEEEGLVKDLSVIGSHAFARMEGDVDKQRRLALQGQLSGAAMQKQHQRNYNRWLSRARTEDLSDIAALKALYQSGVDNCGRSVMVVVGRNIPVLLIDMEKALLYFIHMMDHVTAKDYVLVYFHTLTGEHNHLDSDFLKNMYDIIDVKYKKNLKALYFVHPTFRSKVSTWFFTTFTVSGLKDKVHQVESLHQLFTAIPPEQIEIPPFVLDYDARENGPLFTSQSSFLSL.

Residues 25 to 48 (EEGEDVPDGGRKDVPDGGSHSPFP) are disordered. Residues 44–224 (HSPFPYRKDI…TYRRLLPLYF (181 aa)) form the Macro domain. A CRAL-TRIO domain is found at 329 to 483 (DLSDIAALKA…FVLDYDAREN (155 aa)).

This sequence belongs to the GDAP2 family.

The chain is Ganglioside-induced differentiation-associated protein 2 from Xenopus laevis (African clawed frog).